The sequence spans 183 residues: Peptide deformylase (183 aa).

Cys110 and His153 together coordinate Fe cation. Glu154 is an active-site residue. Residue His157 coordinates Fe cation.

It belongs to the polypeptide deformylase family. It depends on Fe(2+) as a cofactor.

It catalyses the reaction N-terminal N-formyl-L-methionyl-[peptide] + H2O = N-terminal L-methionyl-[peptide] + formate. Its function is as follows. Removes the formyl group from the N-terminal Met of newly synthesized proteins. Requires at least a dipeptide for an efficient rate of reaction. N-terminal L-methionine is a prerequisite for activity but the enzyme has broad specificity at other positions. This Listeria welshimeri serovar 6b (strain ATCC 35897 / DSM 20650 / CCUG 15529 / CIP 8149 / NCTC 11857 / SLCC 5334 / V8) protein is Peptide deformylase.